A 102-amino-acid polypeptide reads, in one-letter code: Small ribosomal subunit protein uS10 (102 aa).

Belongs to the universal ribosomal protein uS10 family. As to quaternary structure, part of the 30S ribosomal subunit.

Its function is as follows. Involved in the binding of tRNA to the ribosomes. This Methanospirillum hungatei JF-1 (strain ATCC 27890 / DSM 864 / NBRC 100397 / JF-1) protein is Small ribosomal subunit protein uS10.